Here is a 194-residue protein sequence, read N- to C-terminus: MTAIKLIVGLGNPGAEYEQTRHNAGALFVERIAHAQGINLVADRKYFGLTGRFSHQGQDVRLLIPTTYMNRSGQAVAALAGFFRIKPEEILVAHDELDLPPGVAKLKLGGGHGGHNGLRDIIAQLGNQNNFYRLRLGIGHPGVASMVSNFVLGRAPRAEQEKLDASIDFVLGVLPDIFAGEWNRAMKNLHSQKA.

TRNA is bound at residue Tyr-17. His-22 functions as the Proton acceptor in the catalytic mechanism. Residues Tyr-68, Asn-70, and Asn-116 each coordinate tRNA.

This sequence belongs to the PTH family. In terms of assembly, monomer.

The protein resides in the cytoplasm. The catalysed reaction is an N-acyl-L-alpha-aminoacyl-tRNA + H2O = an N-acyl-L-amino acid + a tRNA + H(+). Its function is as follows. Hydrolyzes ribosome-free peptidyl-tRNAs (with 1 or more amino acids incorporated), which drop off the ribosome during protein synthesis, or as a result of ribosome stalling. In terms of biological role, catalyzes the release of premature peptidyl moieties from peptidyl-tRNA molecules trapped in stalled 50S ribosomal subunits, and thus maintains levels of free tRNAs and 50S ribosomes. In Pseudomonas fluorescens (strain SBW25), this protein is Peptidyl-tRNA hydrolase.